The primary structure comprises 158 residues: Transcription elongation factor GreA (158 aa).

Positions 10 to 75 form a coiled coil; sequence TKEGKEKLEQ…QMLENMIRNA (66 aa).

It belongs to the GreA/GreB family.

In terms of biological role, necessary for efficient RNA polymerase transcription elongation past template-encoded arresting sites. The arresting sites in DNA have the property of trapping a certain fraction of elongating RNA polymerases that pass through, resulting in locked ternary complexes. Cleavage of the nascent transcript by cleavage factors such as GreA or GreB allows the resumption of elongation from the new 3'terminus. GreA releases sequences of 2 to 3 nucleotides. In Geobacillus kaustophilus (strain HTA426), this protein is Transcription elongation factor GreA.